The chain runs to 462 residues: 3-deoxy-D-manno-octulosonic acid transferase (462 aa).

A helical; Signal-anchor transmembrane segment spans residues 2-22 (MLLYYILSFILLPVYFIIIFI). The region spanning 47 to 90 (SLLDLQMSVNQEGFKVDTEHKATSYVYIHRNASLMYKLSLERSY) is the RPE1 insert domain. The active-site Proton acceptor is the glutamate 104. Residues 308–309 (PR), 349–351 (FGE), and 374–377 (NILE) contribute to the CMP site.

The protein belongs to the glycosyltransferase group 1 family.

It localises to the cell inner membrane. It catalyses the reaction lipid IVA (E. coli) + CMP-3-deoxy-beta-D-manno-octulosonate = alpha-Kdo-(2-&gt;6)-lipid IVA (E. coli) + CMP + H(+). It participates in bacterial outer membrane biogenesis; LPS core biosynthesis. Involved in lipopolysaccharide (LPS) biosynthesis. Catalyzes the transfer of 3-deoxy-D-manno-octulosonate (Kdo) residue(s) from CMP-Kdo to lipid IV(A), the tetraacyldisaccharide-1,4'-bisphosphate precursor of lipid A. This chain is 3-deoxy-D-manno-octulosonic acid transferase (waaA), found in Rickettsia typhi (strain ATCC VR-144 / Wilmington).